Reading from the N-terminus, the 165-residue chain is Protein SprT (165 aa).

The SprT-like domain occupies 22–163 (LAQANLKLGR…RCVHCGEQLT (142 aa)). His78 contacts Zn(2+). The active site involves Glu79. His82 contacts Zn(2+).

The protein belongs to the SprT family. The cofactor is Zn(2+).

It localises to the cytoplasm. The sequence is that of Protein SprT from Escherichia fergusonii (strain ATCC 35469 / DSM 13698 / CCUG 18766 / IAM 14443 / JCM 21226 / LMG 7866 / NBRC 102419 / NCTC 12128 / CDC 0568-73).